The sequence spans 237 residues: Thrombin-like enzyme agkihpin-2 (237 aa).

A propeptide is located at residue Met1. A Peptidase S1 domain is found at 2–228 (ILGDDECNIN…HLDWIENIIA (227 aa)). A disulfide bond links Cys27 and Cys43. His42 acts as the Charge relay system in catalysis. Asn80 carries N-linked (GlcNAc...) asparagine glycosylation. Asp87 functions as the Charge relay system in the catalytic mechanism. 3 cysteine pairs are disulfide-bonded: Cys119–Cys189, Cys151–Cys168, and Cys179–Cys204. Catalysis depends on Ser183, which acts as the Charge relay system.

The protein belongs to the peptidase S1 family. Snake venom subfamily. As to expression, expressed by the venom gland (at protein level). Expressed by the venom gland.

It is found in the secreted. The hydrolysis of TAMe (tosyl-arginine methyl ester) substrate is activated by Ca(2+), Fe(3+), Mg(2+) and Zn(2+), and inhibited by EDTA, PMSF and DTT. Thrombin-like enzyme that shows fibrinogenolytic activity against bovine fibrinogen alpha and beta chains, but not gamma chain. Hydrolyzes fibrin. Enhances ADP-induced human platelet aggregation. Has arginine esterase activity for TAMe (tosyl-arginine methyl ester) substrate. Reduces thrombin-induced thrombosis. Does not have hemorrhagic activity. Reduces the motility of human liver cancer HepG2 cells in a wound-healing assay. This chain is Thrombin-like enzyme agkihpin-2, found in Gloydius halys (Chinese water mocassin).